We begin with the raw amino-acid sequence, 430 residues long: UDP-N-acetylglucosamine 1-carboxyvinyltransferase 1 (430 aa).

Residue 22-23 (KN) coordinates phosphoenolpyruvate. Residue Arg93 coordinates UDP-N-acetyl-alpha-D-glucosamine. The active-site Proton donor is the Cys117. Cys117 bears the 2-(S-cysteinyl)pyruvic acid O-phosphothioketal mark. UDP-N-acetyl-alpha-D-glucosamine is bound by residues 122–126 (RPVDL), Asp305, and Val327.

Belongs to the EPSP synthase family. MurA subfamily.

It is found in the cytoplasm. It carries out the reaction phosphoenolpyruvate + UDP-N-acetyl-alpha-D-glucosamine = UDP-N-acetyl-3-O-(1-carboxyvinyl)-alpha-D-glucosamine + phosphate. It functions in the pathway cell wall biogenesis; peptidoglycan biosynthesis. In terms of biological role, cell wall formation. Adds enolpyruvyl to UDP-N-acetylglucosamine. The protein is UDP-N-acetylglucosamine 1-carboxyvinyltransferase 1 of Listeria monocytogenes serovar 1/2a (strain ATCC BAA-679 / EGD-e).